We begin with the raw amino-acid sequence, 219 residues long: Epididymal secretory glutathione peroxidase (219 aa).

The N-terminal stretch at 1–21 (MTVQLGAFYLFPLFMAGFVQT) is a signal peptide. C71 is an active-site residue.

This sequence belongs to the glutathione peroxidase family. As to quaternary structure, homotetramer. In terms of tissue distribution, proximal caput epididymis.

The protein resides in the secreted. The enzyme catalyses 2 glutathione + H2O2 = glutathione disulfide + 2 H2O. In terms of biological role, may constitute a glutathione peroxidase-like protective system against peroxide damage in sperm membrane lipids. Since the purified porcine enzyme has very little activity towards hydrogen peroxide or organic hydroperoxides the protective effect is not likely to be exerted by its enzymatic activity. Instead, may protect sperm from premature acrosome reaction in the epididymis by binding to lipid peroxides, which might otherwise interact with phospholipase A2 and induce the acrosome reaction. In Sus scrofa (Pig), this protein is Epididymal secretory glutathione peroxidase (GPX5).